The primary structure comprises 460 residues: Tubby-related protein 3 (460 aa).

2 disordered regions span residues 37–132 (KKQR…ETAP) and 151–193 (YDEE…GVTA). Residues 151-162 (YDEEPDKEEDEG) are compositionally biased toward acidic residues. Low complexity predominate over residues 166–188 (SSPSARSEESAAASQKAASETGA).

Belongs to the TUB family. As to quaternary structure, associates with the IFT complex A (IFT-A). Interacts with SIRT1. As to expression, widely expressed including eyes and adipose depots.

It is found in the nucleus. The protein localises to the cell membrane. The protein resides in the cell projection. It localises to the cilium. Its subcellular location is the cytoplasm. It is found in the secreted. Functionally, negative regulator of the Shh signaling transduction pathway: recruited to primary cilia via association with the IFT complex A (IFT-A) and is required for recruitment of G protein-coupled receptor GPR161 to cilia, a promoter of PKA-dependent basal repression machinery in Shh signaling. Binds to phosphorylated inositide (phosphoinositide) lipids. Both IFT-A- and phosphoinositide-binding properties are required to regulate ciliary G protein-coupled receptor trafficking. During adipogenesis, regulates ciliary trafficking of FFAR4 in preadipocytes. The polypeptide is Tubby-related protein 3 (Mus musculus (Mouse)).